A 241-amino-acid polypeptide reads, in one-letter code: PHD finger protein ALFIN-LIKE 1 (241 aa).

Position 2 is an N-acetylalanine (alanine 2). Residues 142–182 (DGKPSMDLGSKSRNGVKRSIEGQTKSTPKLMEESYEDEDDE) are disordered. A PHD-type zinc finger spans residues 185-237 (DTLCGSCGGNYTNDEFWICCDVCERWYHGKCVKITPAKAESIKQYKCPSCCTK).

Belongs to the Alfin family. In terms of assembly, interacts with H3K4me3 and to a lesser extent with H3K4me2. In terms of tissue distribution, ubiquitously expressed.

Its subcellular location is the nucleus. In terms of biological role, histone-binding component that specifically recognizes H3 tails trimethylated on 'Lys-4' (H3K4me3), which mark transcription start sites of virtually all active genes. In Arabidopsis thaliana (Mouse-ear cress), this protein is PHD finger protein ALFIN-LIKE 1 (AL1).